The following is a 457-amino-acid chain: tRNA modification GTPase MnmE (457 aa).

Positions 24, 81, and 124 each coordinate (6S)-5-formyl-5,6,7,8-tetrahydrofolate. The 160-residue stretch at 220-379 (GIQLVLAGAP…LKQKILHVVG (160 aa)) folds into the TrmE-type G domain. Asn-230 is a binding site for K(+). GTP-binding positions include 230 to 235 (NVGKSS), 249 to 255 (TPIAGTT), and 274 to 277 (DTAG). Ser-234 contributes to the Mg(2+) binding site. Positions 249, 251, and 254 each coordinate K(+). Mg(2+) is bound at residue Thr-255. Lys-457 is a (6S)-5-formyl-5,6,7,8-tetrahydrofolate binding site.

It belongs to the TRAFAC class TrmE-Era-EngA-EngB-Septin-like GTPase superfamily. TrmE GTPase family. In terms of assembly, homodimer. Heterotetramer of two MnmE and two MnmG subunits. The cofactor is K(+).

It is found in the cytoplasm. Functionally, exhibits a very high intrinsic GTPase hydrolysis rate. Involved in the addition of a carboxymethylaminomethyl (cmnm) group at the wobble position (U34) of certain tRNAs, forming tRNA-cmnm(5)s(2)U34. In Polynucleobacter asymbioticus (strain DSM 18221 / CIP 109841 / QLW-P1DMWA-1) (Polynucleobacter necessarius subsp. asymbioticus), this protein is tRNA modification GTPase MnmE.